Consider the following 273-residue polypeptide: Putative carboxymethylenebutenolidase (273 aa).

Catalysis depends on residues Cys-130, Asp-191, and His-223.

This sequence belongs to the dienelactone hydrolase family.

The catalysed reaction is 2-(5-oxo-2,5-dihydrofuran-2-ylidene)acetate + H2O = 4-oxohex-2-enedioate + H(+). The polypeptide is Putative carboxymethylenebutenolidase (Saccharomyces cerevisiae (strain ATCC 204508 / S288c) (Baker's yeast)).